We begin with the raw amino-acid sequence, 482 residues long: Immune evasion protein OPG047 (482 aa).

The region spanning 20 to 90 (KKFKTIIEAI…SYTGKVYIDS (71 aa)) is the BTB domain. The BACK domain occupies 125-222 (CIECYMMGIE…SNYLSPRGIH (98 aa)). Kelch repeat units lie at residues 273–319 (VVYL…PANN), 320–363 (KLYV…SINN), 365–408 (IYVM…VFGR), 410–447 (LFLV…IVDN), and 448–482 (KLLL…GMEW).

The protein belongs to the orthopoxvirus OPG047 family.

In terms of biological role, might have a role in the suppression of host immune response. The chain is Immune evasion protein OPG047 (OPG047) from Cynomys gunnisoni (Gunnison's prairie dog).